The sequence spans 517 residues: MAAQLLEEKLTCAICLGLYQDPVTLPCGHNFCGACIRDWWDRCGKACPECREPFPDGAELRRNVALSGVLEVVRAGPARDPGPDPGPGPDPAARCPRHGRPLELFCRTEGRCVCSVCTVRECRLHERALLDAERLKREAQLRASLEVTQQQATQAEGQLLELRKQSSQIQNSACILASWVSGKFSSLLQALEIQHTTALRSIEVAKTQALAQARDEEQRLRVHLEAVARHGCRIRELLEQVDEQTFLQESQLLQPPGPLGPLTPLQWDEDQQLGDLKQLLSRLCGLLLEEGSHPGAPAKPVDLAPVEAPGPLAPVPSTVCPLRRKLWQNYRNLTFDPVSANRHFYLSRQDQQVKHCRQSRGPGGPGSFELWQVQCAQSFQAGHHYWEVRASDHSVTLGVSYPQLPRCRLGPHTDNIGRGPCSWGLCVQEDSLQAWHNGEAQRLPGVSGRLLGMDLDLASGCLTFYSLEPQTQPLYTFHALFNQPLTPVFWLLEGRTLTLCHQPGAVFPLGPQEEVLS.

Residue Ala2 is modified to N-acetylalanine. Residues 12-51 (CAICLGLYQDPVTLPCGHNFCGACIRDWWDRCGKACPECR) form an RING-type zinc finger. Residues 75–94 (AGPARDPGPDPGPGPDPAAR) form a disordered region. A B box-type zinc finger spans residues 90–137 (DPAARCPRHGRPLELFCRTEGRCVCSVCTVRECRLHERALLDAERLKR). The Zn(2+) site is built by Cys95, His98, Cys117, and His125. Residues 139-227 (AQLRASLEVT…QRLRVHLEAV (89 aa)) are a coiled coil. Ser185 is subject to Phosphoserine. A (Microbial infection) Glycyl lysine isopeptide (Lys-Gly) (interchain with G-Cter in ubiquitin) cross-link involves residue Lys206. The region spanning 313–506 (APVPSTVCPL…LTLCHQPGAV (194 aa)) is the B30.2/SPRY domain.

The protein belongs to the TRIM/RBCC family. Homo-multimerizes. Interacts with ARRDC4.

It localises to the cytoplasm. The catalysed reaction is S-ubiquitinyl-[E2 ubiquitin-conjugating enzyme]-L-cysteine + [acceptor protein]-L-lysine = [E2 ubiquitin-conjugating enzyme]-L-cysteine + N(6)-ubiquitinyl-[acceptor protein]-L-lysine.. It participates in protein modification; protein ubiquitination. Functionally, E3 ubiquitin ligase that plays a role in several processes including innate immnity, autophagy or inflammation. Negatively regulates miRNAs by modulating the ubiquitination and stability of TNRC6A, a protein involved in RNA-mediated gene silencing by both micro-RNAs (miRNAs) and short interfering RNAs. This ubiquitination results in the suppressed expression of miR-138-5p leading to increased autophagy. Upon enteroviral infection, promotes 'Lys-63'-mediated ubiquitination activation of IFIH1/MDA5 leading to innate signaling cascade. Mechanistically, selectively recognizes MDA5 filaments that occur on dsRNAs. Plays also a role in limitation of inflammation through different mechanisms. First, promotes 'Lys-48'-mediated ubiquitination of VCAM1 leading to its degradation and limitation of LPS-induced lung inflammation. In addition, negatively regulates inflammasome activation by promoting 'lys48'-linked ubiquitination of NLRP3 which is critical for the inhibition of NLRP3 inflammasome activation in resting macrophages. In Homo sapiens (Human), this protein is E3 ubiquitin-protein ligase TRIM65 (TRIM65).